A 325-amino-acid polypeptide reads, in one-letter code: Replication factor C small subunit (325 aa).

Residue 52–59 coordinates ATP; sequence GPAGVGKT.

This sequence belongs to the activator 1 small subunits family. RfcS subfamily. Heteromultimer composed of small subunits (RfcS) and large subunits (RfcL).

Part of the RFC clamp loader complex which loads the PCNA sliding clamp onto DNA. In Natronomonas pharaonis (strain ATCC 35678 / DSM 2160 / CIP 103997 / JCM 8858 / NBRC 14720 / NCIMB 2260 / Gabara) (Halobacterium pharaonis), this protein is Replication factor C small subunit.